The chain runs to 341 residues: tRNA N6-adenosine threonylcarbamoyltransferase (341 aa).

Fe cation is bound by residues histidine 114 and histidine 118. Residues 136 to 140 (LVSGG), aspartate 169, glycine 182, aspartate 186, and asparagine 278 each bind substrate. Aspartate 304 is a Fe cation binding site.

Belongs to the KAE1 / TsaD family. The cofactor is Fe(2+).

Its subcellular location is the cytoplasm. It catalyses the reaction L-threonylcarbamoyladenylate + adenosine(37) in tRNA = N(6)-L-threonylcarbamoyladenosine(37) in tRNA + AMP + H(+). Its function is as follows. Required for the formation of a threonylcarbamoyl group on adenosine at position 37 (t(6)A37) in tRNAs that read codons beginning with adenine. Is involved in the transfer of the threonylcarbamoyl moiety of threonylcarbamoyl-AMP (TC-AMP) to the N6 group of A37, together with TsaE and TsaB. TsaD likely plays a direct catalytic role in this reaction. This is tRNA N6-adenosine threonylcarbamoyltransferase from Lactococcus lactis subsp. cremoris (strain MG1363).